Consider the following 255-residue polypeptide: Hydroxyacylglutathione hydrolase (255 aa).

His53, His55, Asp57, His58, His110, Asp127, and His165 together coordinate Zn(2+).

This sequence belongs to the metallo-beta-lactamase superfamily. Glyoxalase II family. In terms of assembly, monomer. The cofactor is Zn(2+).

It carries out the reaction an S-(2-hydroxyacyl)glutathione + H2O = a 2-hydroxy carboxylate + glutathione + H(+). It functions in the pathway secondary metabolite metabolism; methylglyoxal degradation; (R)-lactate from methylglyoxal: step 2/2. Thiolesterase that catalyzes the hydrolysis of S-D-lactoyl-glutathione to form glutathione and D-lactic acid. In Xanthomonas euvesicatoria pv. vesicatoria (strain 85-10) (Xanthomonas campestris pv. vesicatoria), this protein is Hydroxyacylglutathione hydrolase.